Here is a 232-residue protein sequence, read N- to C-terminus: Sensory rhodopsin III (232 aa).

The next 7 membrane-spanning stretches (helical) occupy residues isoleucine 5–phenylalanine 25, leucine 39–glycine 59, phenylalanine 73–valine 93, leucine 100–glycine 120, isoleucine 125–phenylalanine 145, valine 168–isoleucine 188, and asparagine 194–valine 214. Lysine 205 is modified (N6-(retinylidene)lysine).

This sequence belongs to the archaeal/bacterial/fungal opsin family. In terms of assembly, interacts with HtrM. In terms of processing, the covalent binding of retinal to the apoprotein, bacterioopsin, generates bacteriorhodopsin.

The protein resides in the membrane. Functionally, sensory rhodopsin. Associates with an unusual transducer lacking a methyl-accepting transducer domain found in all other photosensory transducers. The chromophore is all-trans-retinal in the dark. This chain is Sensory rhodopsin III (xop2), found in Haloarcula marismortui (strain ATCC 43049 / DSM 3752 / JCM 8966 / VKM B-1809) (Halobacterium marismortui).